The sequence spans 356 residues: Alanine racemase (356 aa).

The Proton acceptor; specific for D-alanine role is filled by lysine 35. N6-(pyridoxal phosphate)lysine is present on lysine 35. A substrate-binding site is contributed by arginine 130. Catalysis depends on tyrosine 253, which acts as the Proton acceptor; specific for L-alanine. Position 301 (methionine 301) interacts with substrate.

It belongs to the alanine racemase family. The cofactor is pyridoxal 5'-phosphate.

It catalyses the reaction L-alanine = D-alanine. The protein operates within amino-acid biosynthesis; D-alanine biosynthesis; D-alanine from L-alanine: step 1/1. Functionally, catalyzes the interconversion of L-alanine and D-alanine. May also act on other amino acids. The polypeptide is Alanine racemase (alr) (Erwinia tasmaniensis (strain DSM 17950 / CFBP 7177 / CIP 109463 / NCPPB 4357 / Et1/99)).